The primary structure comprises 783 residues: Endonuclease MutS2 (783 aa).

Glycine 333 to threonine 340 lines the ATP pocket. Positions isoleucine 708 to lysine 783 constitute a Smr domain.

It belongs to the DNA mismatch repair MutS family. MutS2 subfamily. Homodimer. Binds to stalled ribosomes, contacting rRNA.

Endonuclease that is involved in the suppression of homologous recombination and thus may have a key role in the control of bacterial genetic diversity. Functionally, acts as a ribosome collision sensor, splitting the ribosome into its 2 subunits. Detects stalled/collided 70S ribosomes which it binds and splits by an ATP-hydrolysis driven conformational change. Acts upstream of the ribosome quality control system (RQC), a ribosome-associated complex that mediates the extraction of incompletely synthesized nascent chains from stalled ribosomes and their subsequent degradation. Probably generates substrates for RQC. The protein is Endonuclease MutS2 of Finegoldia magna (strain ATCC 29328 / DSM 20472 / WAL 2508) (Peptostreptococcus magnus).